The chain runs to 112 residues: Ribonuclease P protein component (112 aa).

This sequence belongs to the RnpA family. In terms of assembly, consists of a catalytic RNA component (M1 or rnpB) and a protein subunit.

The catalysed reaction is Endonucleolytic cleavage of RNA, removing 5'-extranucleotides from tRNA precursor.. Its function is as follows. RNaseP catalyzes the removal of the 5'-leader sequence from pre-tRNA to produce the mature 5'-terminus. It can also cleave other RNA substrates such as 4.5S RNA. The protein component plays an auxiliary but essential role in vivo by binding to the 5'-leader sequence and broadening the substrate specificity of the ribozyme. The chain is Ribonuclease P protein component from Pelotomaculum thermopropionicum (strain DSM 13744 / JCM 10971 / SI).